A 187-amino-acid polypeptide reads, in one-letter code: Dihydrofolate reductase (187 aa).

The DHFR domain maps to 4–185 (PLNCIVAVSQ…IKYKFEVYEK (182 aa)). NADP(+) is bound by residues A10 and 16–22 (GIGKNGD). 31–36 (EFQYFQ) is a substrate binding site. An NADP(+)-binding site is contributed by 55–57 (RKT). R71 provides a ligand contact to substrate. NADP(+) contacts are provided by residues 77 to 79 (SRE) and 117 to 124 (GGSSVYKE).

The protein belongs to the dihydrofolate reductase family. In terms of assembly, homodimer.

The protein localises to the mitochondrion. Its subcellular location is the cytoplasm. The enzyme catalyses (6S)-5,6,7,8-tetrahydrofolate + NADP(+) = 7,8-dihydrofolate + NADPH + H(+). It functions in the pathway cofactor biosynthesis; tetrahydrofolate biosynthesis; 5,6,7,8-tetrahydrofolate from 7,8-dihydrofolate: step 1/1. Functionally, key enzyme in folate metabolism. Contributes to the de novo mitochondrial thymidylate biosynthesis pathway. Catalyzes an essential reaction for de novo glycine and purine synthesis, and for DNA precursor synthesis. Binds its own mRNA and that of DHFR2. This chain is Dihydrofolate reductase (DHFR), found in Bos taurus (Bovine).